A 44-amino-acid chain; its full sequence is MQDIKTYLSTAPVLTTLWFGSLAGLLIEINRLFPDALSFPFFSS.

A helical membrane pass occupies residues 7–27 (YLSTAPVLTTLWFGSLAGLLI).

The protein belongs to the PsaJ family.

Its subcellular location is the plastid. It is found in the chloroplast thylakoid membrane. May help in the organization of the PsaE and PsaF subunits. This is Photosystem I reaction center subunit IX from Phalaenopsis aphrodite subsp. formosana (Moth orchid).